We begin with the raw amino-acid sequence, 835 residues long: Pre-mRNA-processing protein 40C (835 aa).

Polar residues predominate over residues 1–20 (MEGENTTDPPYTTAASSGQS). Residues 1 to 22 (MEGENTTDPPYTTAASSGQSIF) form a disordered region. 2 WW domains span residues 243–276 (GNRL…KPPG) and 295–328 (SLPG…IPAE). The segment at 397–459 (SGMPVSSTIT…DSGPSKEECS (63 aa)) is disordered. The span at 400-428 (PVSSTITSEANSGKTTEVTPSGESGNSTG) shows a compositional bias: polar residues. FF domains are found at residues 455–509 (KEEC…YVKT), 519–577 (RAAH…RVLS), and 590–643 (RAAA…YIAE). Disordered stretches follow at residues 649-677 (RGDD…RKER) and 714-738 (TESK…PADK). 2 consecutive FF domains span residues 691-748 (RKEA…HVKS) and 750-815 (YERC…YVED).

It belongs to the PRPF40 family. As to quaternary structure, interacts (via the WW domains) with the phosphorylated C-terminal domain of NRPB1 (via CTD domain). Expressed in roots, shoots, rosette leaves, cauline leaves, stems and flowers.

The protein resides in the nucleus. Its function is as follows. Binds the phosphorylated C-terminal domain (CTD) of the largest subunit of RNA polymerase II and functions as a scaffold for RNA processing machineries. May be involved in pre-mRNA splicing. This Arabidopsis thaliana (Mouse-ear cress) protein is Pre-mRNA-processing protein 40C.